A 308-amino-acid polypeptide reads, in one-letter code: Tetraacyldisaccharide 4'-kinase (308 aa).

ATP is bound at residue 63 to 70; it reads SFGGNGKT.

Belongs to the LpxK family.

It carries out the reaction a lipid A disaccharide + ATP = a lipid IVA + ADP + H(+). Its pathway is glycolipid biosynthesis; lipid IV(A) biosynthesis; lipid IV(A) from (3R)-3-hydroxytetradecanoyl-[acyl-carrier-protein] and UDP-N-acetyl-alpha-D-glucosamine: step 6/6. Transfers the gamma-phosphate of ATP to the 4'-position of a tetraacyldisaccharide 1-phosphate intermediate (termed DS-1-P) to form tetraacyldisaccharide 1,4'-bis-phosphate (lipid IVA). In Campylobacter jejuni (strain RM1221), this protein is Tetraacyldisaccharide 4'-kinase.